The following is a 252-amino-acid chain: AA9 family lytic polysaccharide monooxygenase B (252 aa).

An N-terminal signal peptide occupies residues 1 to 20 (MVSFTKTFFAIVACALGVQA). 2 residues coordinate Cu(2+): His21 and His106. Residues Cys72 and Cys198 are joined by a disulfide bond. Asn158 is a glycosylation site (N-linked (GlcNAc...) asparagine). Positions 184 and 193 each coordinate O2. Tyr195 contacts Cu(2+). Asn237 carries N-linked (GlcNAc...) asparagine glycosylation.

Belongs to the polysaccharide monooxygenase AA9 family. The cofactor is Cu(2+).

The protein localises to the secreted. It catalyses the reaction [(1-&gt;4)-beta-D-glucosyl]n+m + reduced acceptor + O2 = 4-dehydro-beta-D-glucosyl-[(1-&gt;4)-beta-D-glucosyl]n-1 + [(1-&gt;4)-beta-D-glucosyl]m + acceptor + H2O.. Its function is as follows. Lytic polysaccharide monooxygenase (LPMO) that depolymerizes crystalline and amorphous polysaccharides via the oxidation of scissile alpha- or beta-(1-4)-glycosidic bonds, yielding C1 or C4 oxidation products. Catalysis by LPMOs requires the reduction of the active-site copper from Cu(II) to Cu(I) by a reducing agent and H(2)O(2) or O(2) as a cosubstrate. The synergistic activity of LPMO9B with xylanase Xyl10G or cellulase Cel5B shows efficient bioconversion rates of 56 and 174 percent in pretreated kenaf (Hibiscus cannabinus) and oak, respectively. In Gloeophyllum trabeum (strain ATCC 11539 / FP-39264 / Madison 617) (Brown rot fungus), this protein is AA9 family lytic polysaccharide monooxygenase B.